The chain runs to 1119 residues: DISARM protein DrmA (1119 aa).

Residues 73–95 form a disordered region; sequence PESGMEEDVEQQRNSELEQEAEE. Positions 813–986 constitute a Helicase C-terminal domain; sequence ELSKYIDPYR…ATPYASRARD (174 aa).

This sequence belongs to the helicase family.

The protein resides in the cytoplasm. Its function is as follows. Component of antiviral defense system DISARM (defense island system associated with restriction-modification), composed of DrmE, DrmA, DrmB, DrmC and DrmMII. DISARM is probably a multi-gene restriction module, this subunit is probably a helicase. Expression of DISARM in B.subtilis (strain BEST7003) confers resistance to phages Nf, phi29, phi105, phi3T, SPO1, SPR and SPP1. Protection is over 10(7)-fold against phi3T, 10(4)-10(5)-fold against Nf, phi29, phi105 and SPR, 100-fold against SPO1 and 10-fold against SPP1. DISARM does not interfere with phage adsorption, but instead interferes with (phi3T) DNA replication early in its cycle, preventing replication, circularization and lysogeny and probably causes phage DNA degradation (DNA is degraded in SPP1-infected cells). The chain is DISARM protein DrmA from Bacillus paralicheniformis (strain ATCC 9945a / NCIMB 11709 / CD-2).